The primary structure comprises 88 residues: Large ribosomal subunit protein bL27 (88 aa).

Residues 1–21 form a disordered region; sequence MAHKKGQGSTQNNRDSAGRRL.

The protein belongs to the bacterial ribosomal protein bL27 family.

This chain is Large ribosomal subunit protein bL27, found in Helicobacter pylori (strain J99 / ATCC 700824) (Campylobacter pylori J99).